The following is a 623-amino-acid chain: Chaperone protein HtpG (623 aa).

The segment at 1–336 (MVSKQQTMGF…ASDLPLNISR (336 aa)) is a; substrate-binding. The segment at 337–550 (EILQDNKQVE…EQDMGLEMQR (214 aa)) is b. Positions 551–623 (ILQAAGQQVP…NRVNRLLVSS (73 aa)) are c.

The protein belongs to the heat shock protein 90 family. As to quaternary structure, homodimer.

It localises to the cytoplasm. Molecular chaperone. Has ATPase activity. The protein is Chaperone protein HtpG of Legionella pneumophila subsp. pneumophila (strain Philadelphia 1 / ATCC 33152 / DSM 7513).